A 442-amino-acid polypeptide reads, in one-letter code: D-serine dehydratase (442 aa).

Lys118 carries the post-translational modification N6-(pyridoxal phosphate)lysine.

This sequence belongs to the serine/threonine dehydratase family. DsdA subfamily. As to quaternary structure, monomer. The cofactor is pyridoxal 5'-phosphate.

The enzyme catalyses D-serine = pyruvate + NH4(+). The chain is D-serine dehydratase from Escherichia coli O81 (strain ED1a).